We begin with the raw amino-acid sequence, 203 residues long: Probable chemoreceptor glutamine deamidase CheD (203 aa).

It belongs to the CheD family.

It catalyses the reaction L-glutaminyl-[protein] + H2O = L-glutamyl-[protein] + NH4(+). Functionally, probably deamidates glutamine residues to glutamate on methyl-accepting chemotaxis receptors (MCPs), playing an important role in chemotaxis. The chain is Probable chemoreceptor glutamine deamidase CheD from Janthinobacterium sp. (strain Marseille) (Minibacterium massiliensis).